The sequence spans 221 residues: Fructokinase (221 aa).

This sequence belongs to the carbohydrate kinase PfkB family.

It carries out the reaction D-fructose + ATP = D-fructose 6-phosphate + ADP + H(+). In Salmonella thompson, this protein is Fructokinase (scrK).